Here is a 359-residue protein sequence, read N- to C-terminus: MSLQRFLQRQGSNGNLEYCADSAYGSYSVLTGQLTMEDNRRIQVLADTVATLPRGRKQLALARSSSLGDFSWSQRKVVTVEKQDNGTFGFEIQTYRLQNQNICSSEVCTMICKVQEDSPAHCAGLQVGDIFANVNGVSTEGFTHKQVVDLIRSSGNLLTIETLNGTMIHRRAELEAKLQTLKQTLKKKWVELRSLHLQEQRLLHGDTANSPNLENMDLDESSLFGNLLGPSPALLDRHRLSSESSCKSWLSSLTVDSEDGYRSSMSEDSIRGAFSRQTSTDDECFHSKDGDEILRNASSRRNRSISVTSSGSFSPLWESNYSSVFGTLPRKSRRGSVRKQILKFIPGLHRAVEEEESRF.

One can recognise a PDZ domain in the interval 77 to 166 (VVTVEKQDNG…LLTIETLNGT (90 aa)). The stretch at 165-188 (GTMIHRRAELEAKLQTLKQTLKKK) forms a coiled coil. An interaction with CYTH1 region spans residues 166-188 (TMIHRRAELEAKLQTLKQTLKKK).

In terms of assembly, interacts with CYTH1 and SNX27.

Its subcellular location is the cytoplasm. It localises to the early endosome. Functionally, by its binding to cytohesin-1 (CYTH1), it modifies activation of ARFs by CYTH1 and its precise function may be to sequester CYTH1 in the cytoplasm. The chain is Cytohesin-interacting protein (Cytip) from Mus musculus (Mouse).